Here is a 488-residue protein sequence, read N- to C-terminus: MTKNNEAGWNLDNSYATLPHSFYTEIPPTPVSSPELVKLNHSLAISLGFNPEELKKETEIAIFAGNALPEGAHPLAQAYAGHQFGHFNMLGDGRALLIGEQITPSGKRFDIQLKGSGPTPYSRRGDGRAALGPMLREYIISEAMYALDIPTTRSLAVVTTGEPTYRETKLPGAILTRVASSHIRVGTFQYAAARGSIEDLQSLADYTIKRHYPEIEDPENRYTALLQEVIKKQASLIAKWQLVGFIHGVMNTDNITISGETIDYGPCAFMDHYDQGTVFSSIDTQGRYAYGNQPYMAAWDLARLAESLIPILHEDEEEALKIAQDEISKFSVQYENLWFLGMKKKLGLFSNEEQDHSLIEQLLKMMEKYKADYTNTFRSLTLNTLENTPLFDSSEFKEWYKLWQSRLERQDESKENAYEMMKNNNPSIIPRNHRVEEALEAAVTNGDYSVMEKLLEALANPYAYATDQEEYCVTPAPTNRPYRTFCGT.

Residues G91, G93, R94, K114, D126, G127, R177, and R184 each contribute to the ATP site. D253 functions as the Proton acceptor in the catalytic mechanism. N254 and D263 together coordinate Mg(2+). ATP is bound at residue D263.

This sequence belongs to the SELO family. Mg(2+) is required as a cofactor. Mn(2+) serves as cofactor.

The enzyme catalyses L-seryl-[protein] + ATP = 3-O-(5'-adenylyl)-L-seryl-[protein] + diphosphate. It catalyses the reaction L-threonyl-[protein] + ATP = 3-O-(5'-adenylyl)-L-threonyl-[protein] + diphosphate. It carries out the reaction L-tyrosyl-[protein] + ATP = O-(5'-adenylyl)-L-tyrosyl-[protein] + diphosphate. The catalysed reaction is L-histidyl-[protein] + UTP = N(tele)-(5'-uridylyl)-L-histidyl-[protein] + diphosphate. The enzyme catalyses L-seryl-[protein] + UTP = O-(5'-uridylyl)-L-seryl-[protein] + diphosphate. It catalyses the reaction L-tyrosyl-[protein] + UTP = O-(5'-uridylyl)-L-tyrosyl-[protein] + diphosphate. Nucleotidyltransferase involved in the post-translational modification of proteins. It can catalyze the addition of adenosine monophosphate (AMP) or uridine monophosphate (UMP) to a protein, resulting in modifications known as AMPylation and UMPylation. The protein is Protein nucleotidyltransferase YdiU of Bacillus cereus (strain ATCC 10987 / NRS 248).